The primary structure comprises 709 residues: Polyribonucleotide nucleotidyltransferase (709 aa).

The Mg(2+) site is built by Asp-482 and Asp-488. The KH domain occupies 549–608 (PRIITMSIDPDKIREVIGPGGKVINKIIAETGVKIDIEDDGRIFIAATDTEAANKAVRII). The S1 motif domain occupies 618 to 686 (GKVYTGKVTR…KQGRINLSRK (69 aa)).

It belongs to the polyribonucleotide nucleotidyltransferase family. Mg(2+) is required as a cofactor.

It localises to the cytoplasm. The catalysed reaction is RNA(n+1) + phosphate = RNA(n) + a ribonucleoside 5'-diphosphate. Functionally, involved in mRNA degradation. Catalyzes the phosphorolysis of single-stranded polyribonucleotides processively in the 3'- to 5'-direction. The chain is Polyribonucleotide nucleotidyltransferase from Heliobacterium modesticaldum (strain ATCC 51547 / Ice1).